We begin with the raw amino-acid sequence, 245 residues long: 3-deoxy-manno-octulosonate cytidylyltransferase (245 aa).

The protein belongs to the KdsB family.

It localises to the cytoplasm. It carries out the reaction 3-deoxy-alpha-D-manno-oct-2-ulosonate + CTP = CMP-3-deoxy-beta-D-manno-octulosonate + diphosphate. It participates in nucleotide-sugar biosynthesis; CMP-3-deoxy-D-manno-octulosonate biosynthesis; CMP-3-deoxy-D-manno-octulosonate from 3-deoxy-D-manno-octulosonate and CTP: step 1/1. It functions in the pathway bacterial outer membrane biogenesis; lipopolysaccharide biosynthesis. Functionally, activates KDO (a required 8-carbon sugar) for incorporation into bacterial lipopolysaccharide in Gram-negative bacteria. This is 3-deoxy-manno-octulosonate cytidylyltransferase from Rhodopseudomonas palustris (strain HaA2).